The sequence spans 660 residues: Bifunctional polymyxin resistance protein ArnA (660 aa).

The tract at residues 1–304 (MKTVVFAYHD…TLGLVQGSRL (304 aa)) is formyltransferase ArnAFT. 86 to 88 (HLI) is a binding site for (6R)-10-formyltetrahydrofolate. His104 acts as the Proton donor; for formyltransferase activity in catalysis. (6R)-10-formyltetrahydrofolate is bound by residues Arg114 and 136-140 (VKRAD). The dehydrogenase ArnADH stretch occupies residues 314-660 (RRTRVLILGV…RTVDLTDKPS (347 aa)). NAD(+)-binding positions include Asp347 and 368 to 369 (DI). UDP-alpha-D-glucuronate contacts are provided by residues Ala393, Tyr398, and 432–433 (TS). The Proton acceptor; for decarboxylase activity role is filled by Glu434. UDP-alpha-D-glucuronate contacts are provided by residues Arg460, Asn492, 526-535 (KLIDGGKQKR), and Tyr613. Arg619 acts as the Proton donor; for decarboxylase activity in catalysis.

The protein in the N-terminal section; belongs to the Fmt family. UDP-L-Ara4N formyltransferase subfamily. In the C-terminal section; belongs to the NAD(P)-dependent epimerase/dehydratase family. UDP-glucuronic acid decarboxylase subfamily. In terms of assembly, homohexamer, formed by a dimer of trimers.

The catalysed reaction is UDP-alpha-D-glucuronate + NAD(+) = UDP-beta-L-threo-pentopyranos-4-ulose + CO2 + NADH. It catalyses the reaction UDP-4-amino-4-deoxy-beta-L-arabinose + (6R)-10-formyltetrahydrofolate = UDP-4-deoxy-4-formamido-beta-L-arabinose + (6S)-5,6,7,8-tetrahydrofolate + H(+). It functions in the pathway nucleotide-sugar biosynthesis; UDP-4-deoxy-4-formamido-beta-L-arabinose biosynthesis; UDP-4-deoxy-4-formamido-beta-L-arabinose from UDP-alpha-D-glucuronate: step 1/3. It participates in nucleotide-sugar biosynthesis; UDP-4-deoxy-4-formamido-beta-L-arabinose biosynthesis; UDP-4-deoxy-4-formamido-beta-L-arabinose from UDP-alpha-D-glucuronate: step 3/3. Its pathway is bacterial outer membrane biogenesis; lipopolysaccharide biosynthesis. Bifunctional enzyme that catalyzes the oxidative decarboxylation of UDP-glucuronic acid (UDP-GlcUA) to UDP-4-keto-arabinose (UDP-Ara4O) and the addition of a formyl group to UDP-4-amino-4-deoxy-L-arabinose (UDP-L-Ara4N) to form UDP-L-4-formamido-arabinose (UDP-L-Ara4FN). The modified arabinose is attached to lipid A and is required for resistance to polymyxin and cationic antimicrobial peptides. This is Bifunctional polymyxin resistance protein ArnA from Escherichia coli O9:H4 (strain HS).